A 361-amino-acid polypeptide reads, in one-letter code: Phospho-N-acetylmuramoyl-pentapeptide-transferase (361 aa).

A run of 10 helical transmembrane segments spans residues 28 to 48, 74 to 94, 99 to 119, 135 to 155, 167 to 187, 203 to 223, 236 to 256, 263 to 283, 288 to 308, and 338 to 358; these read LAVLVTLSLSFLIGPRLIKFL, TMGGIMIILSSCFSTLLLADL, IWITLFGFVSFSIIGFLDDYA, LLLQGIISLIVCILLEYTIDS, SLSMDLGYLYIFFAIFVIVGA, VPIALTAGSFALISYLVGNLI, TGELTIFCASIVGSCLGFLWF, VFMGDTGSLSLGGVLGIISVI, IVLGIVGGLFVIETISVIMQV, and KVVIRFWIISLIFVLIGLSSL.

The protein belongs to the glycosyltransferase 4 family. MraY subfamily. The cofactor is Mg(2+).

Its subcellular location is the cell inner membrane. It catalyses the reaction UDP-N-acetyl-alpha-D-muramoyl-L-alanyl-gamma-D-glutamyl-meso-2,6-diaminopimeloyl-D-alanyl-D-alanine + di-trans,octa-cis-undecaprenyl phosphate = di-trans,octa-cis-undecaprenyl diphospho-N-acetyl-alpha-D-muramoyl-L-alanyl-D-glutamyl-meso-2,6-diaminopimeloyl-D-alanyl-D-alanine + UMP. The protein operates within cell wall biogenesis; peptidoglycan biosynthesis. Catalyzes the initial step of the lipid cycle reactions in the biosynthesis of the cell wall peptidoglycan: transfers peptidoglycan precursor phospho-MurNAc-pentapeptide from UDP-MurNAc-pentapeptide onto the lipid carrier undecaprenyl phosphate, yielding undecaprenyl-pyrophosphoryl-MurNAc-pentapeptide, known as lipid I. The protein is Phospho-N-acetylmuramoyl-pentapeptide-transferase of Rickettsia bellii (strain OSU 85-389).